Reading from the N-terminus, the 1140-residue chain is DNA damage-binding protein 1 (1140 aa).

The residue at position 2 (Ser2) is an N-acetylserine. The segment at 2–768 is interaction with CDT1; that stretch reads SYNYVVTAQK…QALSSSVSSS (767 aa). Residues 13–356 form a WD repeat beta-propeller A region; it reads TAVNGCVTGH…VVAMETFTNL (344 aa). Positions 391-708 are WD repeat beta-propeller B; Interaction with CUL4A; that stretch reads RNGIGIHEHA…LTIGTIDEIQ (318 aa). Residues 709–1043 are WD repeat beta-propeller C; the sequence is KLHIRTVPLY…NGMIGLVTSL (335 aa). Residues 771 to 1140 form an interaction with CDT1 and CUL4A region; the sequence is FSSSTAPHET…KVVEELTRIH (370 aa). Lys1067 carries the N6-acetyllysine modification. Lys1121 is covalently cross-linked (Glycyl lysine isopeptide (Lys-Gly) (interchain with G-Cter in SUMO2)). Thr1125 carries the phosphothreonine modification.

It belongs to the DDB1 family. As to quaternary structure, component of the UV-DDB complex which includes DDB1 and DDB2; the heterodimer dimerizes to give rise to a heterotetramer when bound to damaged DNA. The UV-DDB complex interacts with monoubiquitinated histone H2A and binds to XPC via the DDB2 subunit. Component of numerous DCX (DDB1-CUL4-X-box) E3 ubiquitin-protein ligase complexes which consist of a core of DDB1, CUL4A or CUL4B and RBX1. DDB1 may recruit specific substrate targeting subunits to the DCX complex. These substrate targeting subunits are generally known as DCAF (DDB1- and CUL4-associated factor) or CDW (CUL4-DDB1-associated WD40-repeat) proteins. Interacts with AMBRA1, ATG16L1, BTRC, CRBN, DCAF1, DCAF4, DCAF5, DCAF6, DCAF7, DCAF8, DCAF9, DCAF10, DCAF11, DCAF12, DCAF15, DCAF16, DCAF17, DDA1, DET1, DTL, ERCC8, FBXW5, FBXW8, GRWD1, KATNB1, NLE1, NUP43, PAFAH1B1, PHIP, PWP1, RBBP4, RBBP5, RBBP7, COP1, SNRNP40, DCAF1, WDR5, WDR5B, WDR12, WDR26, WDR39, WDR42, WDR53, WDR59, WDR61, WSB1, WSB2, LRWD1 and WDTC1. DCX complexes may associate with the COP9 signalosome, and this inhibits the E3 ubiquitin-protein ligase activity of the complex. Interacts with NF2, TSC1 and TSC2. Interacts with AGO1 and AGO2. Associates with the E3 ligase complex containing DYRK2, EDD/UBR5, DDB1 and DCAF1 proteins (EDVP complex). Interacts directly with DYRK2. DCX(DTL) complex interacts with FBXO11; does not ubiquitinate and degradate FBXO11. Interacts with TRPC4AP. Interacts with CRY1 and CRY2. The DDB1-CUL4A complex interacts with CRY1. May also interact with DCUN1D1, DCUN1D2, DCUN1D3 and DCUN1D5. Component of the DCX(DCAF13) E3 ubiquitin ligase complex, at least composed of CUL4 (CUL4A or CUL4B), DDB1, DCAF13 and RBX1. Interacts with DCAF13 (via WD40 domain). In terms of processing, phosphorylated by ABL1. Ubiquitinated by CUL4A. Subsequently degraded by ubiquitin-dependent proteolysis. Post-translationally, acetylated, promoting interaction with CUL4 (CUL4A or CUL4B) and subsequent formation of DCX (DDB1-CUL4-X-box) E3 ubiquitin-protein ligase complexes. Deacetylation by SIRT7 impairs the interaction with CUL4 (CUL4A or CUL4B) and formation of DCX (DDB1-CUL4-X-box) E3 ubiquitin-protein ligase complexes.

The protein resides in the cytoplasm. The protein localises to the nucleus. It functions in the pathway protein modification; protein ubiquitination. Functionally, protein, which is both involved in DNA repair and protein ubiquitination, as part of the UV-DDB complex and DCX (DDB1-CUL4-X-box) complexes, respectively. Core component of the UV-DDB complex (UV-damaged DNA-binding protein complex), a complex that recognizes UV-induced DNA damage and recruit proteins of the nucleotide excision repair pathway (the NER pathway) to initiate DNA repair. The UV-DDB complex preferentially binds to cyclobutane pyrimidine dimers (CPD), 6-4 photoproducts (6-4 PP), apurinic sites and short mismatches. Also functions as a component of numerous distinct DCX (DDB1-CUL4-X-box) E3 ubiquitin-protein ligase complexes which mediate the ubiquitination and subsequent proteasomal degradation of target proteins. The functional specificity of the DCX E3 ubiquitin-protein ligase complex is determined by the variable substrate recognition component recruited by DDB1. DCX(DDB2) (also known as DDB1-CUL4-ROC1, CUL4-DDB-ROC1 and CUL4-DDB-RBX1) may ubiquitinate histone H2A, histone H3 and histone H4 at sites of UV-induced DNA damage. The ubiquitination of histones may facilitate their removal from the nucleosome and promote subsequent DNA repair. DCX(DDB2) also ubiquitinates XPC, which may enhance DNA-binding by XPC and promote NER. DCX(DTL) plays a role in PCNA-dependent polyubiquitination of CDT1 and MDM2-dependent ubiquitination of TP53 in response to radiation-induced DNA damage and during DNA replication. DCX(ERCC8) (the CSA complex) plays a role in transcription-coupled repair (TCR). The DDB1-CUL4A-DTL E3 ligase complex regulates the circadian clock function by mediating the ubiquitination and degradation of CRY1. DDB1-mediated CRY1 degradation promotes FOXO1 protein stability and FOXO1-mediated gluconeogenesis in the liver. By acting on TET dioxygenses, essential for oocyte maintenance at the primordial follicle stage, hence essential for female fertility. Maternal factor required for proper zygotic genome activation and genome reprogramming. The protein is DNA damage-binding protein 1 (DDB1) of Pongo abelii (Sumatran orangutan).